Here is a 333-residue protein sequence, read N- to C-terminus: Pro-cathepsin H (333 aa).

Residues 1–20 (MWAALPLLCAGAWLLSTGAT) form the signal peptide. The propeptide at 21-95 (AELTVNAIEK…AEIKHKFLWS (75 aa)) is activation peptide. Asparagine 70 and asparagine 99 each carry an N-linked (GlcNAc...) asparagine glycan. 4 cysteine pairs are disulfide-bonded: cysteine 100/cysteine 325, cysteine 136/cysteine 179, cysteine 170/cysteine 212, and cysteine 270/cysteine 320. Positions 104 to 113 (KSNYLRGTGP) are excised as a propeptide. Residue cysteine 139 is part of the active site. Asparagine 228 carries an N-linked (GlcNAc...) asparagine glycan. Active-site residues include histidine 279 and asparagine 299.

This sequence belongs to the peptidase C1 family. In terms of assembly, composed of a mini chain and a large chain. The large chain may be split into heavy and light chain. All chains are held together by disulfide bonds. As to expression, widely expressed with highest expression found in non-skeletal tissues. Low levels found in skeletal tissue.

The protein resides in the lysosome. It catalyses the reaction Hydrolysis of proteins, acting as an aminopeptidase (notably, cleaving Arg-|-Xaa bonds) as well as an endopeptidase.. Important for the overall degradation of proteins in lysosomes. In Mus musculus (Mouse), this protein is Pro-cathepsin H (Ctsh).